A 929-amino-acid polypeptide reads, in one-letter code: ATP-dependent RNA helicase DDX42 (929 aa).

Lys5 bears the N6-acetyllysine mark. Position 12 is an omega-N-methylarginine (Arg12). Disordered regions lie at residues 25 to 119 and 182 to 203; these read KKEE…LEAF and EYDS…LPPI. The segment covering 35 to 52 has biased composition (low complexity); sequence SHSAFGAASSSSGFGKSA. Ser58 carries the phosphoserine modification. A compositionally biased stretch (acidic residues) spans 70–84; the sequence is DEENAYFEDEEEDSS. A phosphoserine mark is found at Ser96, Ser104, Ser109, and Ser111. Residues 116-157 are a coiled coil; the sequence is LEAFMAEVEDQAARDMKRLEEKDKERKNVKGIRDDIEEEDDQ. Ser185 bears the Phosphoserine mark. The Q motif signature appears at 253–281; the sequence is SSFAHFGFDEQLMHQIRKSEYTQPTPIQC. The Helicase ATP-binding domain maps to 284–459; that stretch reads VPVALSGRDM…RDILIDPIRV (176 aa). 297–304 contributes to the ATP binding site; the sequence is AKTGSGKT. The DEAD box signature appears at 407 to 410; it reads DEAD. One can recognise a Helicase C-terminal domain in the interval 487-632; the sequence is WLTRRLVEFT…HVSKELLDLA (146 aa). 2 disordered regions span residues 662 to 682 and 723 to 929; these read ERPG…VMSN and GTSS…RWDS. Over residues 723-737 the composition is skewed to low complexity; sequence GTSSAGASGWTSAGS. Polar residues-rich tracts occupy residues 738-777 and 787-798; these read LNSV…SSAP and GVNNTASGNNSR. A necessary for interaction with TP53BP2 region spans residues 739–828; that stretch reads NSVPTNSAQQ…RHSHGDGGNR (90 aa). Positions 821 to 911 are enriched in basic and acidic residues; the sequence is SHGDGGNRHG…KVDSKTDKTP (91 aa). Lys894 participates in a covalent cross-link: Glycyl lysine isopeptide (Lys-Gly) (interchain with G-Cter in SUMO2).

It belongs to the DEAD box helicase family. DDX42 subfamily. In terms of assembly, transient component of the SF3B subcomplex of the 17S U2 SnRNP complex. Interacts (via the C-terminus) with TP53BP2; the interaction is not inhibitied by TP53BP2 ubiquitination and is independent of p53/TP53.

It is found in the cytoplasm. It localises to the nucleus. The catalysed reaction is ATP + H2O = ADP + phosphate + H(+). Its function is as follows. ATP-dependent RNA helicase that binds to partially double-stranded RNAs (dsRNAs) in order to unwind RNA secondary structures. Unwinding is promoted in the presence of single-strand binding proteins. Also mediates RNA duplex formation thereby displacing the single-strand RNA binding protein. ATP and ADP modulate its activity: ATP binding and hydrolysis by DDX42 triggers RNA strand separation, whereas the ADP-bound form of the protein triggers annealing of complementary RNA strands. Required for assembly of the 17S U2 SnRNP complex of the spliceosome, a large ribonucleoprotein complex that removes introns from transcribed pre-mRNAs: DDX42 associates transiently with the SF3B subcomplex of the 17S U2 SnRNP complex and is released after fulfilling its role in the assembly of 17S U2 SnRNP. Involved in the survival of cells by interacting with TP53BP2 and thereby counteracting the apoptosis-stimulating activity of TP53BP2. Relocalizes TP53BP2 to the cytoplasm. This is ATP-dependent RNA helicase DDX42 (Ddx42) from Mus musculus (Mouse).